Here is a 440-residue protein sequence, read N- to C-terminus: MGDLELLLPGEAEVLVRGLRSFQLREMGSEGWNKQHESLEKLNMQAILDATISQAEPIQELLINHGKIPTLVEELIAVEMWKQKVFPVLCRLEDFKPQNTFPIYMVVHHEASIINLLETVFFHKEVCESADDKVLDLVDYCHRKLILLVARKGGGDLSEEEQFQDSTPMQELQKQAEMMEFEISLKALSVLRYITDCVDSLSLSTLNRMLRTHNLPCLLVELLEHSPWSRRVGGKLQHFESGRWQTVAPSEQQKLNKLDGQVWIALYNLLLSPEARARYCLTSFAKGQLLKLQAFLTDTLLDQLPNLADLKGFLAHLSLAETQPPKKDLVLEQIPEIWDRLERENKGKWQAIAKHQLQHVFSLSEKDLRQQAQRWAETYRLDVLEAVAPERPRCGYCNAEASKRCSRCQNVWYCCRECQVKHWEKHGKTCVLAAQGDRAK.

Zn(2+) contacts are provided by C394, C397, C405, C408, C414, C418, H426, and C430. The MYND-type zinc-finger motif lies at C394–C430.

The protein belongs to the ZMYND10 family. In terms of assembly, interacts (via C-terminus) with DNAAF11 (via CS domain); this interaction stabilizes DNAAF11 at the protein level. Interacts (via C-terminus) with DNAL1; this interaction stabilizes DNAL1 at the protein level. Interacts with DNAAF4, HSPA8, IQUB, RUVBL2 and DYNTL5. In terms of tissue distribution, expressed in the testis. Expressed in the tracheal epithelium. Restricted to regions containing motile cilia.

The protein resides in the cytoplasm. Its subcellular location is the cytoskeleton. The protein localises to the microtubule organizing center. It is found in the centrosome. It localises to the centriolar satellite. The protein resides in the apical cell membrane. Its subcellular location is the dynein axonemal particle. Plays a role in axonemal structure organization and motility. Involved in axonemal pre-assembly of inner and outer dynein arms (IDA and ODA, respectively) for proper axoneme building for cilia motility. May act by indirectly regulating transcription of dynein proteins. The chain is Zinc finger MYND domain-containing protein 10 (Zmynd10) from Mus musculus (Mouse).